Reading from the N-terminus, the 538-residue chain is Carboxypeptidase 2 (538 aa).

The N-terminal stretch at 1–21 is a signal peptide; the sequence is MVAYRFLTLISLGLGSHCASA. An N-linked (GlcNAc...) asparagine glycan is attached at Asn-46. The interval 53–76 is disordered; the sequence is PAFTSPGTVPRGFSDGTSGPTRDE. The Peptidase M14 domain maps to 71-351; sequence GPTRDETMEG…VMVKSILQTA (281 aa). Zn(2+) is bound by residues His-136, Glu-139, and His-224. Glu-322 acts as the Proton donor/acceptor in catalysis. Asn-393 and Asn-459 each carry an N-linked (GlcNAc...) asparagine glycan.

It belongs to the peptidase M14 family. The cofactor is Zn(2+).

The protein resides in the secreted. Its function is as follows. Extracellular metalloprotease that contributes to pathogenicity. In Trichophyton tonsurans (Scalp ringworm fungus), this protein is Carboxypeptidase 2 (MCPB).